A 220-amino-acid polypeptide reads, in one-letter code: 3-dehydroquinate dehydratase (220 aa).

3-dehydroquinate contacts are provided by residues 29–31 (EFR) and Arg-56. The Proton donor/acceptor role is filled by His-116. Lys-142 (schiff-base intermediate with substrate) is an active-site residue. Residues Arg-180, Ser-200, and Gln-204 each contribute to the 3-dehydroquinate site.

This sequence belongs to the type-I 3-dehydroquinase family. Homodimer.

The catalysed reaction is 3-dehydroquinate = 3-dehydroshikimate + H2O. Its pathway is metabolic intermediate biosynthesis; chorismate biosynthesis; chorismate from D-erythrose 4-phosphate and phosphoenolpyruvate: step 3/7. Involved in the third step of the chorismate pathway, which leads to the biosynthesis of aromatic amino acids. Catalyzes the cis-dehydration of 3-dehydroquinate (DHQ) and introduces the first double bond of the aromatic ring to yield 3-dehydroshikimate. The sequence is that of 3-dehydroquinate dehydratase from Methanocaldococcus jannaschii (strain ATCC 43067 / DSM 2661 / JAL-1 / JCM 10045 / NBRC 100440) (Methanococcus jannaschii).